The chain runs to 201 residues: Lipopolysaccharide core heptose(II)-phosphate phosphatase (201 aa).

Residues 1–35 (MLAFILRFIKNKSYFALLAGAWVIIAGLTSQHAWS) form the signal peptide.

Belongs to the phosphoglycerate mutase family. Ais subfamily.

The protein resides in the periplasm. It functions in the pathway bacterial outer membrane biogenesis; lipopolysaccharide metabolism. In terms of biological role, catalyzes the dephosphorylation of heptose(II) of the outer membrane lipopolysaccharide core. The protein is Lipopolysaccharide core heptose(II)-phosphate phosphatase of Salmonella arizonae (strain ATCC BAA-731 / CDC346-86 / RSK2980).